The primary structure comprises 379 residues: Alkanesulfonate monooxygenase (379 aa).

This sequence belongs to the SsuD family.

The enzyme catalyses an alkanesulfonate + FMNH2 + O2 = an aldehyde + FMN + sulfite + H2O + 2 H(+). Catalyzes the desulfonation of aliphatic sulfonates. This is Alkanesulfonate monooxygenase from Sorangium cellulosum (strain So ce56) (Polyangium cellulosum (strain So ce56)).